We begin with the raw amino-acid sequence, 150 residues long: Arginine repressor (150 aa).

The protein belongs to the ArgR family.

Its subcellular location is the cytoplasm. Its pathway is amino-acid biosynthesis; L-arginine biosynthesis [regulation]. Regulates arginine biosynthesis genes. The protein is Arginine repressor of Clostridium botulinum (strain Loch Maree / Type A3).